Reading from the N-terminus, the 371-residue chain is L-lysine 4-hydroxylase (371 aa).

Fe cation is bound by residues histidine 174, glutamate 176, and histidine 310.

It belongs to the clavaminate synthase family. It depends on Fe(2+) as a cofactor.

The enzyme catalyses L-lysine + 2-oxoglutarate + O2 = (4R)-4-hydroxy-L-lysine + succinate + CO2. Its function is as follows. Alpha-ketoglutarate-dependent dioxygenase that in vitro catalyzes the regio- and stereoselective hydroxylation of L-lysine, leading to (4R)-4-hydroxy-L-lysine. This chain is L-lysine 4-hydroxylase, found in Niastella koreensis (strain DSM 17620 / KACC 11465 / NBRC 106392 / GR20-10).